We begin with the raw amino-acid sequence, 236 residues long: Phosphoribosylaminoimidazole-succinocarboxamide synthase (236 aa).

The protein belongs to the SAICAR synthetase family.

The catalysed reaction is 5-amino-1-(5-phospho-D-ribosyl)imidazole-4-carboxylate + L-aspartate + ATP = (2S)-2-[5-amino-1-(5-phospho-beta-D-ribosyl)imidazole-4-carboxamido]succinate + ADP + phosphate + 2 H(+). It participates in purine metabolism; IMP biosynthesis via de novo pathway; 5-amino-1-(5-phospho-D-ribosyl)imidazole-4-carboxamide from 5-amino-1-(5-phospho-D-ribosyl)imidazole-4-carboxylate: step 1/2. This is Phosphoribosylaminoimidazole-succinocarboxamide synthase from Pseudomonas entomophila (strain L48).